A 396-amino-acid chain; its full sequence is Gap junction gamma-1 protein (396 aa).

At 1-22 the chain is on the cytoplasmic side; sequence MSWSFLTRLLEEIHNHSTFVGK. Residues 23-45 form a helical membrane-spanning segment; the sequence is IWLTVLIVFRIVLTAVGGESIYY. Over 46–75 the chain is Extracellular; the sequence is DEQSKFVCNTEQPGCENVCYDAFAPLSHVR. The chain crosses the membrane as a helical span at residues 76 to 95; it reads FWVFQIILVATPSVMYLGYA. Topologically, residues 96 to 175 are cytoplasmic; sequence IHKIAKMEHG…RRIREDGLMK (80 aa). The interval 145–165 is disordered; that stretch reads ELESDKENKEQSQPKPKHDGR. The segment covering 147–156 has biased composition (basic and acidic residues); the sequence is ESDKENKEQS. Residues 176-198 traverse the membrane as a helical segment; the sequence is IYVLQLLARTVFEVGFLIGQYFL. Residues 199–228 are Extracellular-facing; sequence YGFQVHPFYVCSRLPCPHKIDCFISRPTEK. The helical transmembrane segment at 229 to 248 threads the bilayer; sequence TIFLLIMYGVTGLCLLLNIW. The Cytoplasmic segment spans residues 249–396; it reads EMLHLGFGTI…SGDGKTSVWI (148 aa). Residues 353–396 form a disordered region; it reads VQAYSHQNNPHGPREKKAKVGSKAGSNKSTASSKSGDGKTSVWI. The segment covering 376–387 has biased composition (polar residues); it reads AGSNKSTASSKS.

Belongs to the connexin family. Gamma-type subfamily. A connexon is composed of a hexamer of connexins. Interacts with CNST.

The protein resides in the cell membrane. It localises to the cell junction. It is found in the gap junction. One gap junction consists of a cluster of closely packed pairs of transmembrane channels, the connexons, through which materials of low MW diffuse from one cell to a neighboring cell. The sequence is that of Gap junction gamma-1 protein (GJC1) from Homo sapiens (Human).